The sequence spans 396 residues: Ribosomal RNA large subunit methyltransferase I (396 aa).

The PUA domain maps to 2–79 (AIRIKLKPGR…REEEIDRAFF (78 aa)).

Belongs to the methyltransferase superfamily. RlmI family.

The protein resides in the cytoplasm. The enzyme catalyses cytidine(1962) in 23S rRNA + S-adenosyl-L-methionine = 5-methylcytidine(1962) in 23S rRNA + S-adenosyl-L-homocysteine + H(+). Functionally, specifically methylates the cytosine at position 1962 (m5C1962) of 23S rRNA. The sequence is that of Ribosomal RNA large subunit methyltransferase I from Shewanella putrefaciens (strain CN-32 / ATCC BAA-453).